The chain runs to 127 residues: MORF4 family-associated protein 1 (127 aa).

The segment at 76–97 (ESALNHLQNPDDGAEGRGTKRC) is disordered. A coiled-coil region spans residues 92-126 (RGTKRCEKAEEKAKEIAKMAEMLVELVRRIEKSES).

The protein belongs to the MORF4 family-associated protein family. As to quaternary structure, found in a complex composed of MORF4L1, MRFAP1 and RB1. Interacts via its N-terminus with MORF4L1. Interacts with CSTB and MORF4L2.

It is found in the nucleus. The protein localises to the cytoplasm. Its subcellular location is the perinuclear region. This chain is MORF4 family-associated protein 1, found in Bos taurus (Bovine).